A 360-amino-acid polypeptide reads, in one-letter code: N-acetylmuramoyl-L-alanine amidase CwlL (360 aa).

Positions Met1 to Ala39 are cleaved as a signal peptide. The 115-residue stretch at Leu40–Pro154 folds into the N-acetylmuramoyl-L-alanine amidase domain. 4 consecutive repeat copies span residues Arg166 to Ser191, Leu196 to Leu259, Lys265 to Ser289, and Leu291 to Leu355. 2 X approximate repeats regions lie at residues Arg166–Ser289 and Leu196–Leu355.

The protein belongs to the N-acetylmuramoyl-L-alanine amidase 2 family.

It localises to the secreted. It carries out the reaction Hydrolyzes the link between N-acetylmuramoyl residues and L-amino acid residues in certain cell-wall glycopeptides.. In Bacillus licheniformis, this protein is N-acetylmuramoyl-L-alanine amidase CwlL (cwlL).